Here is a 1146-residue protein sequence, read N- to C-terminus: Integrin alpha-PS1 (1146 aa).

The first 30 residues, 1 to 30 (MLELPFTTIRPNCRLRQNLGILIILQCVLT), serve as a signal peptide directing secretion. At 31 to 1085 (CYNFNLEQRL…NQQRDTSIPW (1055 aa)) the chain is on the extracellular side. FG-GAP repeat units lie at residues 38 to 105 (QRLP…FDDC), 121 to 186 (LSPP…FEEV), 193 to 245 (RPVQ…YLQR), 254 to 303 (HSDL…KSTD), 304 to 366 (NPIP…TLPM), 367 to 422 (KYTL…GLNS), and 432 to 494 (ELGG…RKEL). N-linked (GlcNAc...) asparagine glycosylation is found at Asn68, Asn86, and Asn147. N-linked (GlcNAc...) asparagine glycans are attached at residues Asn470, Asn511, Asn657, Asn680, Asn711, Asn718, Asn761, and Asn928. The tract at residues 938 to 958 (YYSSSHRDDHSDDTQSNRNRV) is disordered. Basic and acidic residues predominate over residues 942-952 (SHRDDHSDDTQ). A glycan (N-linked (GlcNAc...) asparagine) is linked at Asn1027. A helical transmembrane segment spans residues 1086-1106 (LIIILGIVGGLLLLALVTYVL). The Cytoplasmic portion of the chain corresponds to 1107 to 1146 (WKVGFFKRIRPTDPTLSGNLEKMNEEKPFLAPSKNTHHVF).

The protein belongs to the integrin alpha chain family. In terms of assembly, heterodimer of an alpha and a beta subunit. The alpha subunit is composed of a heavy and a light chain linked by a disulfide bond. Alpha-PS1 associates with beta-PS. Expressed in follicle cells (at protein level). At syncytial blastoderm stage, expressed in the ectoderm but not in the mesodermal precursors. At embryonic stage 7, expressed in dorsal and ventrolateral ectoderm and in some yolk nuclei. At late stage 10, expression is homogeneous in the ectoderm and is particularly abundant in the anterior and posterior midgut primordia. At stage 11, strongly expressed in a metameric pattern in the ectoderm, in the proctodeum and in the posterior midgut primordium. At stage 12, accumulates at the segment boundaries that start to become morphologically visible, similar expression pattern is observed in the central nervous system. In third larval instar wing imaginal disk, strongly expressed in the dorsal compartment, in the adepithelial cells and in patches on the peripodial membrane covering the imaginal disk to the outside.

The protein localises to the apical cell membrane. It is found in the lateral cell membrane. Its subcellular location is the basal cell membrane. In terms of biological role, integrin alpha-PS1/beta-PS is a receptor for laminin. This is Integrin alpha-PS1 (mew) from Drosophila melanogaster (Fruit fly).